The chain runs to 92 residues: Small ribosomal subunit protein uS17 (92 aa).

It belongs to the universal ribosomal protein uS17 family. In terms of assembly, part of the 30S ribosomal subunit.

Functionally, one of the primary rRNA binding proteins, it binds specifically to the 5'-end of 16S ribosomal RNA. The protein is Small ribosomal subunit protein uS17 of Mycoplasma mobile (strain ATCC 43663 / 163K / NCTC 11711) (Mesomycoplasma mobile).